A 445-amino-acid chain; its full sequence is Neuropeptide Y receptor type 5 (445 aa).

Residues 1–42 (MDLELDEYYNKTLATENNTAATRNSDFPVWDDYKSSVDDLQY) are Extracellular-facing. N-linked (GlcNAc...) asparagine glycans are attached at residues asparagine 10 and asparagine 17. The helical transmembrane segment at 43-63 (FLIGLYTFVSLLGFMGNLLIL) threads the bilayer. The Cytoplasmic portion of the chain corresponds to 64 to 77 (MALMKKRNQKTTVN). A helical membrane pass occupies residues 78–98 (FLIGNLAFSDILVVLFCSPFT). The Extracellular portion of the chain corresponds to 99–117 (LTSVLLDQWMFGKVMCHIM). Residues cysteine 114 and cysteine 198 are joined by a disulfide bond. The chain crosses the membrane as a helical span at residues 118–138 (PFLQCVSVLVSTLILISIAIV). Over 139–156 (RYHMIKHPISNNLTANHG) the chain is Cytoplasmic. A helical membrane pass occupies residues 157–177 (YFLIATVWTLGFAICSPLPVF). Topologically, residues 178 to 208 (HSLVELQETFGSALLSSRYLCVESWPSDSYR) are extracellular. Residues 209 to 229 (IAFTISLLLVQYILPLVCLTV) traverse the membrane as a helical segment. At 230-369 (SHTSVCRSIS…KKRSRSVFYR (140 aa)) the chain is on the cytoplasmic side. The chain crosses the membrane as a helical span at residues 370 to 390 (LTILILVFAVSWMPLHLFHVV). The Extracellular portion of the chain corresponds to 391-407 (TDFNDNLISNRHFKLVY). A helical membrane pass occupies residues 408 to 428 (CICHLLGMMSCCLNPILYGFL). Over 429–445 (NNGIKADLVSLIHCLHM) the chain is Cytoplasmic. Residue cysteine 442 is the site of S-palmitoyl cysteine attachment.

The protein belongs to the G-protein coupled receptor 1 family. As to expression, brain; hypothalamus.

The protein localises to the cell membrane. In terms of biological role, receptor for neuropeptide Y and peptide YY. The activity of this receptor is mediated by G proteins that inhibit adenylate cyclase activity. Seems to be associated with food intake. Could be involved in feeding disorders. This is Neuropeptide Y receptor type 5 (NPY5R) from Homo sapiens (Human).